The sequence spans 405 residues: Probable tRNA sulfurtransferase (405 aa).

A THUMP domain is found at 60–165; that stretch reads VPVAESLKQI…EEAAYLSYEN (106 aa). ATP is bound by residues 183–184, 208–209, R265, G287, and Q296; these read ML and HF.

Belongs to the ThiI family.

Its subcellular location is the cytoplasm. The catalysed reaction is [ThiI sulfur-carrier protein]-S-sulfanyl-L-cysteine + a uridine in tRNA + 2 reduced [2Fe-2S]-[ferredoxin] + ATP + H(+) = [ThiI sulfur-carrier protein]-L-cysteine + a 4-thiouridine in tRNA + 2 oxidized [2Fe-2S]-[ferredoxin] + AMP + diphosphate. The enzyme catalyses [ThiS sulfur-carrier protein]-C-terminal Gly-Gly-AMP + S-sulfanyl-L-cysteinyl-[cysteine desulfurase] + AH2 = [ThiS sulfur-carrier protein]-C-terminal-Gly-aminoethanethioate + L-cysteinyl-[cysteine desulfurase] + A + AMP + 2 H(+). It participates in cofactor biosynthesis; thiamine diphosphate biosynthesis. Functionally, catalyzes the ATP-dependent transfer of a sulfur to tRNA to produce 4-thiouridine in position 8 of tRNAs, which functions as a near-UV photosensor. Also catalyzes the transfer of sulfur to the sulfur carrier protein ThiS, forming ThiS-thiocarboxylate. This is a step in the synthesis of thiazole, in the thiamine biosynthesis pathway. The sulfur is donated as persulfide by IscS. This chain is Probable tRNA sulfurtransferase, found in Streptococcus mutans serotype c (strain ATCC 700610 / UA159).